Consider the following 239-residue polypeptide: Proteasome activator complex subunit 2 (239 aa).

Ala-2 is modified (N-acetylalanine). Residue Ser-10 is modified to Phosphoserine.

The protein belongs to the PA28 family. In terms of assembly, heterodimer of PSME1 and PSME2, which forms a hexameric ring.

Implicated in immunoproteasome assembly and required for efficient antigen processing. The PA28 activator complex enhances the generation of class I binding peptides by altering the cleavage pattern of the proteasome. In Homo sapiens (Human), this protein is Proteasome activator complex subunit 2 (PSME2).